A 314-amino-acid polypeptide reads, in one-letter code: Annexin-like protein RJ4 (314 aa).

4 Annexin repeats span residues 10-81 (FCAK…RWTL), 82-153 (DPAD…ALVT), 165-236 (KLAN…TAIR), and 240-311 (DPKK…TLLG). Ca(2+)-binding residues include glycine 25, glycine 27, and glutamate 67. Positions 253, 255, 257, 297, and 298 each coordinate Ca(2+).

This sequence belongs to the annexin (TC 1.A.31.1) family. Predominantly in developing fruit.

This chain is Annexin-like protein RJ4, found in Fragaria ananassa (Strawberry).